The sequence spans 359 residues: S-adenosylmethionine:tRNA ribosyltransferase-isomerase (359 aa).

Belongs to the QueA family. Monomer.

It is found in the cytoplasm. It carries out the reaction 7-aminomethyl-7-carbaguanosine(34) in tRNA + S-adenosyl-L-methionine = epoxyqueuosine(34) in tRNA + adenine + L-methionine + 2 H(+). Its pathway is tRNA modification; tRNA-queuosine biosynthesis. Its function is as follows. Transfers and isomerizes the ribose moiety from AdoMet to the 7-aminomethyl group of 7-deazaguanine (preQ1-tRNA) to give epoxyqueuosine (oQ-tRNA). The polypeptide is S-adenosylmethionine:tRNA ribosyltransferase-isomerase (Synechococcus elongatus (strain ATCC 33912 / PCC 7942 / FACHB-805) (Anacystis nidulans R2)).